A 1351-amino-acid polypeptide reads, in one-letter code: D-lysergyl-peptide-synthetase subunit 2 (1351 aa).

Residues 285–684 (RCLSQPTASA…GRKDTQVKLR (400 aa)) are adenylation (A) domain. The 77-residue stretch at 828–904 (APQTTTEKLL…ALACVVRSGK (77 aa)) folds into the Carrier domain. Ser-865 carries the O-(pantetheine 4'-phosphoryl)serine modification. Positions 941 to 1340 (EDVYPCTPLQ…LIRDILAVPQ (400 aa)) are condensation (C) domain.

It belongs to the NRP synthetase family.

Its pathway is alkaloid biosynthesis; ergot alkaloid biosynthesis. D-lysergyl-peptide-synthetase subunit 2; part of the gene cluster that mediates the biosynthesis of fungal ergot alkaloid ergovaline, the predominant ergopeptine product in E.festucae var. lolii. DmaW catalyzes the first step of ergot alkaloid biosynthesis by condensing dimethylallyl diphosphate (DMAP) and tryptophan to form 4-dimethylallyl-L-tryptophan. The second step is catalyzed by the methyltransferase easF that methylates 4-dimethylallyl-L-tryptophan in the presence of S-adenosyl-L-methionine, resulting in the formation of 4-dimethylallyl-L-abrine. The catalase easC and the FAD-dependent oxidoreductase easE then transform 4-dimethylallyl-L-abrine to chanoclavine-I which is further oxidized by easD in the presence of NAD(+), resulting in the formation of chanoclavine-I aldehyde. Agroclavine dehydrogenase easG then mediates the conversion of chanoclavine-I aldehyde to agroclavine via a non-enzymatic adduct reaction: the substrate is an iminium intermediate that is formed spontaneously from chanoclavine-I aldehyde in the presence of glutathione. The presence of easA is not required to complete this reaction. Further conversion of agroclavine to paspalic acid is a two-step process involving oxidation of agroclavine to elymoclavine and of elymoclavine to paspalic acid, the second step being performed by the elymoclavine oxidase cloA. Paspalic acid is then further converted to D-lysergic acid. Ergovaline is assembled from D-lysergic acid and three different amino acids by the D-lysergyl-peptide-synthetase composed of a monomudular (lpsB) and a trimodular (lpsA) nonribosomal peptide synthetase subunit. The chain is D-lysergyl-peptide-synthetase subunit 2 from Epichloe festucae var. lolii (Neotyphodium lolii).